A 157-amino-acid polypeptide reads, in one-letter code: UPF0212 protein rrnAC1165 (157 aa).

Positions 105–157 (VLEIEEIPEESDETTEDESSSAESEADADDPPSDQSADESDDVLPEFEELIDE) are disordered. The span at 106–157 (LEIEEIPEESDETTEDESSSAESEADADDPPSDQSADESDDVLPEFEELIDE) shows a compositional bias: acidic residues.

The protein belongs to the UPF0212 family.

The polypeptide is UPF0212 protein rrnAC1165 (Haloarcula marismortui (strain ATCC 43049 / DSM 3752 / JCM 8966 / VKM B-1809) (Halobacterium marismortui)).